Consider the following 677-residue polypeptide: Beta-galactosidase (677 aa).

An N-terminal signal peptide occupies residues 1–23 (MPGFLVRILPLLLVLLLLGPTRG). The propeptide occupies 24 to 28 (LRNAT). Asn-26 carries N-linked (GlcNAc...) asparagine glycosylation. Substrate contacts are provided by Tyr-83, Glu-129, and Asn-187. The active-site Proton donor is the Glu-188. A disulfide bond links Cys-195 and Cys-230. N-linked (GlcNAc...) asparagine glycosylation occurs at Asn-247. Glu-268 (nucleophile) is an active-site residue. Residue Tyr-333 participates in substrate binding. N-linked (GlcNAc...) asparagine glycans are attached at residues Asn-464, Asn-498, Asn-542, Asn-545, and Asn-555. Residues Cys-626 and Cys-634 are joined by a disulfide bond. The tract at residues 650 to 677 (YDHPSKPVEKRLMPPPPQKNKDSWLDHV) is disordered. Basic and acidic residues-rich tracts occupy residues 652-661 (HPSKPVEKRL) and 668-677 (KNKDSWLDHV).

This sequence belongs to the glycosyl hydrolase 35 family. In terms of assembly, homodimer. May form higher multimers. As to expression, detected in placenta (at protein level). Detected in fibroblasts and testis.

The protein localises to the lysosome. It localises to the cytoplasm. It is found in the perinuclear region. The catalysed reaction is Hydrolysis of terminal non-reducing beta-D-galactose residues in beta-D-galactosides.. Its function is as follows. Cleaves beta-linked terminal galactosyl residues from gangliosides, glycoproteins, and glycosaminoglycans. Has no beta-galactosidase catalytic activity, but plays functional roles in the formation of extracellular elastic fibers (elastogenesis) and in the development of connective tissue. Seems to be identical to the elastin-binding protein (EBP), a major component of the non-integrin cell surface receptor expressed on fibroblasts, smooth muscle cells, chondroblasts, leukocytes, and certain cancer cell types. In elastin producing cells, associates with tropoelastin intracellularly and functions as a recycling molecular chaperone which facilitates the secretions of tropoelastin and its assembly into elastic fibers. The polypeptide is Beta-galactosidase (GLB1) (Homo sapiens (Human)).